The following is a 366-amino-acid chain: 3-dehydroquinate synthase (366 aa).

NAD(+)-binding positions include 74–79 (SGEAAK), 108–112 (GVVGD), 132–133 (TT), Lys-144, Lys-153, and 171–174 (FLRT). Zn(2+)-binding residues include Glu-186, His-249, and His-266.

It belongs to the sugar phosphate cyclases superfamily. Dehydroquinate synthase family. The cofactor is Co(2+). It depends on Zn(2+) as a cofactor. NAD(+) serves as cofactor.

The protein resides in the cytoplasm. It catalyses the reaction 7-phospho-2-dehydro-3-deoxy-D-arabino-heptonate = 3-dehydroquinate + phosphate. Its pathway is metabolic intermediate biosynthesis; chorismate biosynthesis; chorismate from D-erythrose 4-phosphate and phosphoenolpyruvate: step 2/7. Functionally, catalyzes the conversion of 3-deoxy-D-arabino-heptulosonate 7-phosphate (DAHP) to dehydroquinate (DHQ). The chain is 3-dehydroquinate synthase from Geobacillus thermodenitrificans (strain NG80-2).